The primary structure comprises 338 residues: Ketol-acid reductoisomerase (NADP(+)) (338 aa).

The KARI N-terminal Rossmann domain occupies 1–181 (MQVYYDKDCD…GGGRTGIIET (181 aa)). NADP(+)-binding positions include 24–27 (YGSQ), Arg-47, Ser-50, Ser-52, and 82–85 (DEFQ). His-107 is an active-site residue. Gly-133 provides a ligand contact to NADP(+). The 146-residue stretch at 182-327 (TFKDETETDL…EKLRAMMPWI (146 aa)) folds into the KARI C-terminal knotted domain. Residues Asp-190, Glu-194, Glu-226, and Glu-230 each contribute to the Mg(2+) site. A substrate-binding site is contributed by Ser-251.

The protein belongs to the ketol-acid reductoisomerase family. Mg(2+) is required as a cofactor.

It catalyses the reaction (2R)-2,3-dihydroxy-3-methylbutanoate + NADP(+) = (2S)-2-acetolactate + NADPH + H(+). It carries out the reaction (2R,3R)-2,3-dihydroxy-3-methylpentanoate + NADP(+) = (S)-2-ethyl-2-hydroxy-3-oxobutanoate + NADPH + H(+). It participates in amino-acid biosynthesis; L-isoleucine biosynthesis; L-isoleucine from 2-oxobutanoate: step 2/4. It functions in the pathway amino-acid biosynthesis; L-valine biosynthesis; L-valine from pyruvate: step 2/4. Its function is as follows. Involved in the biosynthesis of branched-chain amino acids (BCAA). Catalyzes an alkyl-migration followed by a ketol-acid reduction of (S)-2-acetolactate (S2AL) to yield (R)-2,3-dihydroxy-isovalerate. In the isomerase reaction, S2AL is rearranged via a Mg-dependent methyl migration to produce 3-hydroxy-3-methyl-2-ketobutyrate (HMKB). In the reductase reaction, this 2-ketoacid undergoes a metal-dependent reduction by NADPH to yield (R)-2,3-dihydroxy-isovalerate. The chain is Ketol-acid reductoisomerase (NADP(+)) from Teredinibacter turnerae (strain ATCC 39867 / T7901).